The sequence spans 418 residues: Multidrug resistance protein MdtG (418 aa).

The next 11 helical transmembrane spans lie at 19–39, 56–76, 90–110, 113–133, 144–164, 171–191, 222–242, 251–271, 288–308, 317–337, and 376–396; these read IGCF…PLYV, LVFS…GGLA, LGMA…QFLI, ALLG…ATQI, TLST…GVLA, PVFF…LLFI, LFVT…ILTL, VANI…AALI, ILIA…FVQT, FLLG…LVYN, and AVFL…GLSL.

This sequence belongs to the major facilitator superfamily. DHA1 family. MdtG (TC 2.A.1.2.20) subfamily.

It localises to the cell inner membrane. This is Multidrug resistance protein MdtG from Enterobacter lignolyticus (strain SCF1).